Reading from the N-terminus, the 398-residue chain is Nicotinate phosphoribosyltransferase (398 aa).

His-214 carries the phosphohistidine; by autocatalysis modification.

It belongs to the NAPRTase family. Post-translationally, transiently phosphorylated on a His residue during the reaction cycle. Phosphorylation strongly increases the affinity for substrates and increases the rate of nicotinate D-ribonucleotide production. Dephosphorylation regenerates the low-affinity form of the enzyme, leading to product release.

It catalyses the reaction nicotinate + 5-phospho-alpha-D-ribose 1-diphosphate + ATP + H2O = nicotinate beta-D-ribonucleotide + ADP + phosphate + diphosphate. It participates in cofactor biosynthesis; NAD(+) biosynthesis; nicotinate D-ribonucleotide from nicotinate: step 1/1. In terms of biological role, catalyzes the synthesis of beta-nicotinate D-ribonucleotide from nicotinate and 5-phospho-D-ribose 1-phosphate at the expense of ATP. The polypeptide is Nicotinate phosphoribosyltransferase (Xanthomonas campestris pv. campestris (strain B100)).